Reading from the N-terminus, the 591-residue chain is L-fucose isomerase (591 aa).

Catalysis depends on proton acceptor residues glutamate 337 and aspartate 361. Positions 337, 361, and 528 each coordinate Mn(2+).

It belongs to the L-fucose isomerase family. Homohexamer. The cofactor is Mn(2+).

The protein resides in the cytoplasm. The catalysed reaction is L-fucose = L-fuculose. The protein operates within carbohydrate degradation; L-fucose degradation; L-lactaldehyde and glycerone phosphate from L-fucose: step 1/3. In terms of biological role, converts the aldose L-fucose into the corresponding ketose L-fuculose. The chain is L-fucose isomerase from Shigella dysenteriae serotype 1 (strain Sd197).